Here is a 415-residue protein sequence, read N- to C-terminus: Probable disease resistance protein At5g66890 (415 aa).

An NB-ARC domain is found at 8 to 43 (SFDALPHNLRECFLDMASFLEDQRIIASTIIDLWSA). LRR repeat units lie at residues 229–251 (SLEK…EDVS), 256–278 (SLQE…ISQV), 280–303 (SLKK…GDLR), 304–326 (DLET…IDRL), 328–351 (NLRF…GKLK), and 352–373 (KLEK…VKNL). Positions 239 to 260 (HVVDALNELEDVSETLQSLQEI) form a coiled coil.

Belongs to the disease resistance NB-LRR family.

Its function is as follows. Possible disease resistance protein. The chain is Probable disease resistance protein At5g66890 from Arabidopsis thaliana (Mouse-ear cress).